A 155-amino-acid polypeptide reads, in one-letter code: Cytochrome c-550 (155 aa).

The first 20 residues, 1 to 20 (MKISIYATLAAITLALPAAA), serve as a signal peptide directing secretion. Gln-21 carries the post-translational modification Pyrrolidone carboxylic acid. Residues Cys-35, Cys-38, His-39, and Met-120 each contribute to the heme c site. Residues 150–155 (AEGESN) constitute a propeptide that is removed on maturation.

Post-translationally, binds 1 heme c group covalently per subunit.

This Paracoccus denitrificans protein is Cytochrome c-550 (cycA).